The primary structure comprises 429 residues: Glutamate-1-semialdehyde 2,1-aminomutase 2 (429 aa).

Position 268 is an N6-(pyridoxal phosphate)lysine (lysine 268).

It belongs to the class-III pyridoxal-phosphate-dependent aminotransferase family. HemL subfamily. As to quaternary structure, homodimer. It depends on pyridoxal 5'-phosphate as a cofactor.

The protein resides in the cytoplasm. The catalysed reaction is (S)-4-amino-5-oxopentanoate = 5-aminolevulinate. Its pathway is porphyrin-containing compound metabolism; protoporphyrin-IX biosynthesis; 5-aminolevulinate from L-glutamyl-tRNA(Glu): step 2/2. This Bacillus cereus (strain AH820) protein is Glutamate-1-semialdehyde 2,1-aminomutase 2.